Reading from the N-terminus, the 422-residue chain is Dihydroorotase (422 aa).

Residues His59 and His61 each contribute to the Zn(2+) site. Residues 61-63 and Asn93 each bind substrate; that span reads HFR. Zn(2+) contacts are provided by Asp150, His177, and His230. Asn276 provides a ligand contact to substrate. Residue Asp303 coordinates Zn(2+). The active site involves Asp303. Residue His307 coordinates substrate.

It belongs to the metallo-dependent hydrolases superfamily. DHOase family. Class I DHOase subfamily. The cofactor is Zn(2+).

The catalysed reaction is (S)-dihydroorotate + H2O = N-carbamoyl-L-aspartate + H(+). The protein operates within pyrimidine metabolism; UMP biosynthesis via de novo pathway; (S)-dihydroorotate from bicarbonate: step 3/3. In terms of biological role, catalyzes the reversible cyclization of carbamoyl aspartate to dihydroorotate. This Streptococcus pyogenes serotype M1 protein is Dihydroorotase.